An 852-amino-acid polypeptide reads, in one-letter code: Thrombospondin type-1 domain-containing protein 1 (852 aa).

Positions 1–24 (MKPMLKDFSNLLLVVLCDYVLGEA) are cleaved as a signal peptide. Residues 25 to 413 (EYLLLREPGH…QPQGPVKSNN (389 aa)) lie on the Extracellular side of the membrane. 7 N-linked (GlcNAc...) asparagine glycosylation sites follow: asparagine 39, asparagine 53, asparagine 58, asparagine 69, asparagine 80, asparagine 135, and asparagine 304. The region spanning 340-393 (TETWGLWQPWSQCSATCGDGVRERRRVCLTSFPSSPVCPGMSLEASLCSLEECA) is the TSP type-1 domain. 3 cysteine pairs are disulfide-bonded: cysteine 352–cysteine 387, cysteine 356–cysteine 392, and cysteine 367–cysteine 377. A helical transmembrane segment spans residues 414–434 (IVTVTGISLCLFIIIATVLIT). Over 435–852 (LWRRFGRPAK…STLSVEKLVI (418 aa)) the chain is Cytoplasmic. 2 disordered regions span residues 444–517 (KCST…ESFQ) and 624–799 (LIRK…RKDK). Serine 463 is subject to Phosphoserine. A compositionally biased stretch (basic residues) spans 645–654 (ARNAHFRRTA). A compositionally biased stretch (basic and acidic residues) spans 655 to 669 (SFHEARQARPFRERS). A compositionally biased stretch (polar residues) spans 670–685 (MSTLTPRQAPAYSSRT). The span at 686 to 696 (RTCEQAEDRFR) shows a compositional bias: basic and acidic residues. Composition is skewed to polar residues over residues 766–778 (SHKS…SSPI) and 785–794 (QRVSSLSPSQ).

Part of a complex composed of THSD1, PTK2/FAK1, TLN1 and VCL. Interacts with TLN1.

Its subcellular location is the endosome membrane. It is found in the cell junction. It localises to the focal adhesion. The protein resides in the membrane. The protein localises to the secreted. Is a positive regulator of nascent focal adhesion assembly, involved in the modulation of endothelial cell attachment to the extracellular matrix. This chain is Thrombospondin type-1 domain-containing protein 1 (THSD1), found in Homo sapiens (Human).